A 253-amino-acid chain; its full sequence is Imidazole glycerol phosphate synthase subunit HisF (253 aa).

Active-site residues include D11 and D130.

The protein belongs to the HisA/HisF family. Heterodimer of HisH and HisF.

It localises to the cytoplasm. It carries out the reaction 5-[(5-phospho-1-deoxy-D-ribulos-1-ylimino)methylamino]-1-(5-phospho-beta-D-ribosyl)imidazole-4-carboxamide + L-glutamine = D-erythro-1-(imidazol-4-yl)glycerol 3-phosphate + 5-amino-1-(5-phospho-beta-D-ribosyl)imidazole-4-carboxamide + L-glutamate + H(+). Its pathway is amino-acid biosynthesis; L-histidine biosynthesis; L-histidine from 5-phospho-alpha-D-ribose 1-diphosphate: step 5/9. Functionally, IGPS catalyzes the conversion of PRFAR and glutamine to IGP, AICAR and glutamate. The HisF subunit catalyzes the cyclization activity that produces IGP and AICAR from PRFAR using the ammonia provided by the HisH subunit. The protein is Imidazole glycerol phosphate synthase subunit HisF of Clostridium botulinum (strain Alaska E43 / Type E3).